The sequence spans 623 residues: Lethal(3)malignant brain tumor-like protein 4 (623 aa).

Positions 1–44 are disordered; the sequence is MKQPNRKRKLNMDSKERLDQDGRLEQAEEEKKPKDSTTPLSHVP. Positions 10 to 35 are enriched in basic and acidic residues; the sequence is LNMDSKERLDQDGRLEQAEEEKKPKD. MBT repeat units lie at residues 52–152, 160–260, and 269–364; these read WSWE…LHIP, FVWM…LIAP, and FSWT…LEVP. The CCHHC-type zinc-finger motif lies at 370–414; it reads LKILPGQAVCPTPGCRGIGHIRGPRYSGHHSAFGCPYSDMNLKKE. Zn(2+) is bound by residues Cys-379, Cys-384, His-398, and Cys-404. In terms of domain architecture, SAM spans 543 to 607; the sequence is WTVDEVAEFV…YNSILMFRHS (65 aa).

The protein resides in the nucleus. Its function is as follows. Putative Polycomb group (PcG) protein. PcG proteins maintain the transcriptionally repressive state of genes, probably via a modification of chromatin, rendering it heritably changed in its expressibility. This Homo sapiens (Human) protein is Lethal(3)malignant brain tumor-like protein 4 (L3MBTL4).